Consider the following 101-residue polypeptide: Small ribosomal subunit protein uS14 (101 aa).

It belongs to the universal ribosomal protein uS14 family. In terms of assembly, part of the 30S ribosomal subunit. Contacts proteins S3 and S10.

In terms of biological role, binds 16S rRNA, required for the assembly of 30S particles and may also be responsible for determining the conformation of the 16S rRNA at the A site. The protein is Small ribosomal subunit protein uS14 of Shewanella baltica (strain OS155 / ATCC BAA-1091).